Reading from the N-terminus, the 179-residue chain is Large ribosomal subunit protein uL5 (179 aa).

This sequence belongs to the universal ribosomal protein uL5 family. In terms of assembly, part of the 50S ribosomal subunit; part of the 5S rRNA/L5/L18/L25 subcomplex. Contacts the 5S rRNA and the P site tRNA. Forms a bridge to the 30S subunit in the 70S ribosome.

This is one of the proteins that bind and probably mediate the attachment of the 5S RNA into the large ribosomal subunit, where it forms part of the central protuberance. In the 70S ribosome it contacts protein S13 of the 30S subunit (bridge B1b), connecting the 2 subunits; this bridge is implicated in subunit movement. Contacts the P site tRNA; the 5S rRNA and some of its associated proteins might help stabilize positioning of ribosome-bound tRNAs. This Cronobacter sakazakii (strain ATCC BAA-894) (Enterobacter sakazakii) protein is Large ribosomal subunit protein uL5.